The sequence spans 769 residues: 3-O-beta-D-glucopyranosyl-beta-D-glucuronide phosphorylase (769 aa).

Asp457 (proton donor) is an active-site residue.

This sequence belongs to the glycosyl hydrolase 94 family. In terms of assembly, homodimer.

It localises to the cytoplasm. It catalyses the reaction 3-O-beta-D-glucosyl-D-glucuronate + phosphate = aldehydo-D-glucuronate + alpha-D-glucose 1-phosphate. The enzyme catalyses a 3-O-beta-D-glucosyl-beta-D-glucuronoside + phosphate = a beta-D-glucuronoside + alpha-D-glucose 1-phosphate. Its function is as follows. Glycoside phosphorylase that catalyzes the reversible phosphorolysis of 3-O-beta-D-glucosyl-D-glucuronate into D-glucuronic acid and alpha-D-glucose 1-phosphate. Cannot phosphorolyze cellobionic acid and laminaribiose. In the reverse direction, using alpha-D-glucose 1-phosphate as a donor substrate, the enzyme acts on D-glucuronate and its artificial derivative p-nitrophenyl-beta-D-glucuronide. The apparent catalytic efficiency towards p-nitrophenyl-beta-D-glucuronide is approximately 5-fold higher than that towards D-glucuronic acid. Is probably involved in the metabolism of oligosaccharides containing the 3-O-beta-D-glucopyranosyl-beta-D-glucuronide structure released from bacterial and plant acidic carbohydrates. This chain is 3-O-beta-D-glucopyranosyl-beta-D-glucuronide phosphorylase, found in Paenibacillus borealis.